A 393-amino-acid polypeptide reads, in one-letter code: Negative regulator of ofd1 (393 aa).

The segment at 1 to 51 is disordered; sequence MIGRRPQGLRAAASLKKQQQLEKQKQEASYELSGNSSPSKENGSENVDNGE. Basic and acidic residues predominate over residues 19 to 28; sequence QQLEKQKQEA. Residues 32-47 are compositionally biased toward polar residues; that stretch reads LSGNSSPSKENGSENV.

This sequence belongs to the ETT1 family. As to quaternary structure, interacts with ofd1.

It localises to the cytoplasm. The protein localises to the nucleus. In terms of biological role, required for correct translation termination. Positive regulator of the stability of the N-terminal transcription factor domain (Sre1N) of sre1 which is released from the membrane and enters the nucleus to activate hypoxic gene expression. Also acts as a direct inhibitor of ofd1. Functions probably by inhibiting the ability of the ofd1 to accelerate Sre1N degradation in absence of oxygen. The protein is Negative regulator of ofd1 (nro1) of Schizosaccharomyces pombe (strain 972 / ATCC 24843) (Fission yeast).